Consider the following 445-residue polypeptide: Protein kinase C and casein kinase substrate in neurons protein 1 (445 aa).

Residues 12–282 enclose the F-BAR domain; it reads DETTDSFWEV…TIVSASAQED (271 aa). Coiled-coil stretches lie at residues 146-167 and 183-219; these read AKKL…KEEK and TTDQ…NKCT. Residues 327–390 form a disordered region; the sequence is LTQVTHGAEH…PFEEDSKGVR (64 aa). Polar residues-rich tracts occupy residues 338 to 358 and 368 to 379; these read TPQT…QYSA and TAAQSASETNGG. The region spanning 386–445 is the SH3 domain; it reads SKGVRVRALYDYEGQEQDELTFKAGDELTKLEDEDEQGWCKGRLDSGQLGLYPANYVEPV.

Interacts with cobl.

The protein resides in the cytoplasm. Its subcellular location is the cytosol. It localises to the cell membrane. It is found in the cell projection. The protein localises to the synapse. The protein resides in the synaptosome. Its subcellular location is the cytoplasmic vesicle membrane. It localises to the ruffle membrane. It is found in the membrane. Its function is as follows. Binds to membranes via its F-BAR domain and mediates membrane tubulation. Plays a role in cellular transport processes by recruiting dynamins to membranes. Plays a role in the reorganization of the actin cytoskeleton and in neuron morphogenesis via its interaction with cobl, and by recruiting cobl to the cell cortex. Plays a role in the regulation of neurite formation, neurite branching and the regulation of neurite length. Required for normal synaptic vesicle endocytosis; this process retrieves previously released neurotransmitters to accommodate multiple cycles of neurotransmission. Required for normal excitatory and inhibitory synaptic transmission. Required for normal embryonic development, including normal development of laterality, normal body size and shape, as well as normal brain and heart development. Required for normal development of stereocilia and kinocilia in sensory hair cells of neuromasts in the posterior lateral line organ, and thus also for balance keeping and normal swimming behavior. The protein is Protein kinase C and casein kinase substrate in neurons protein 1 (pacsin1b) of Danio rerio (Zebrafish).